The chain runs to 887 residues: DNA mismatch repair protein MutS (887 aa).

626-633 (GPNMAGKS) provides a ligand contact to ATP.

This sequence belongs to the DNA mismatch repair MutS family.

This protein is involved in the repair of mismatches in DNA. It is possible that it carries out the mismatch recognition step. This protein has a weak ATPase activity. The protein is DNA mismatch repair protein MutS of Methanococcoides burtonii (strain DSM 6242 / NBRC 107633 / OCM 468 / ACE-M).